The chain runs to 557 residues: Potassium-transporting ATPase potassium-binding subunit (557 aa).

Helical transmembrane passes span 5-25, 63-83, 132-152, 170-190, 253-273, 283-303, 329-349, 356-376, 379-399, 416-436, 484-504, and 526-546; these read GFLL…PLGS, LSAI…MLLG, GLTV…FALI, LLRI…LFFI, FVQM…FGEV, LLWA…WAEV, VLVS…AVIA, ALGG…FGGV, GLYG…LMIG, LTAL…ALAM, LLAL…MAIA, and LFVG…FIPA.

This sequence belongs to the KdpA family. In terms of assembly, the system is composed of three essential subunits: KdpA, KdpB and KdpC.

It localises to the cell inner membrane. Its function is as follows. Part of the high-affinity ATP-driven potassium transport (or Kdp) system, which catalyzes the hydrolysis of ATP coupled with the electrogenic transport of potassium into the cytoplasm. This subunit binds the periplasmic potassium ions and delivers the ions to the membrane domain of KdpB through an intramembrane tunnel. The protein is Potassium-transporting ATPase potassium-binding subunit of Escherichia coli (strain UTI89 / UPEC).